We begin with the raw amino-acid sequence, 507 residues long: RNA-binding protein Nova-1 (507 aa).

Residues 1-44 (MMAAAPIQQNGTHTGVPIDLDPPDSRKRPLEAPPEAGSTKRTNT) form a disordered region. The Bipartite nuclear localization signal motif lies at 27–43 (KRPLEAPPEAGSTKRTN). Residues 49–116 (QYFLKVLIPS…EALNAVHGFI (68 aa)) enclose the KH 1 domain. The disordered stretch occupies residues 139 to 171 (QTTVNPDRIKQTLPSSPTTTKSSPSDPMTTSRA). Residues 150–169 (TLPSSPTTTKSSPSDPMTTS) are compositionally biased toward low complexity. Phosphoserine is present on Ser154. KH domains lie at 171–237 (ANQV…VELI) and 421–488 (KDVV…QYLI). The tract at residues 419 to 503 (GSKDVVEIAV…YEQGVRAANP (85 aa)) is required for RNA binding.

Interacts with PTBP2; the interaction is direct. In terms of tissue distribution, expressed in neurons of the cortex, sub-cortex, cerebellum and brainstem (at protein level). Expressed in motor neurons, but not in glia.

The protein localises to the nucleus. Its function is as follows. Functions to regulate alternative splicing in neurons by binding pre-mRNA in a sequence-specific manner to activate exon inclusion or exclusion. It binds specifically to the sequences 5'-YCAY-3' and regulates splicing in only a subset of regulated exons. Binding to an exonic 5'-YCAY-3' cluster changes the protein complexes assembled on pre-mRNA, blocking U1 snRNP binding and exon inclusion, whereas binding to an intronic 5'-YCAY-3' cluster enhances spliceosome assembly and exon inclusion. Binding to 5'-YCAY-3' clusters results in a local and asymmetric action to regulate spliceosome assembly and alternative splicing in neurons. Binding to an exonic 5'-YCAY-3' cluster changed the protein complexes assembled on pre-mRNA, blocking U1 snRNP (small nuclear ribonucleoprotein) binding and exon inclusion, whereas binding to an intronic 5'-YCAY-3' cluster enhanced spliceosome assembly and exon inclusion. With NOVA1, they perform unique biological functions in different brain areas and cell types. Autoregulates its own expression by acting as a splicing repressor. Acts to activate the inclusion of exon E3A in the glycine receptor alpha-2 chain and of exon E9 in gamma-aminobutyric-acid receptor gamma-2 subunit via a distal downstream UCAU-rich intronic splicing enhancer. Acts to regulate a novel glycine receptor alpha-2 chain splice variant (alpha-2N) in developing spinal cord. This is RNA-binding protein Nova-1 from Mus musculus (Mouse).